The primary structure comprises 64 residues: Large ribosomal subunit protein uL29 (64 aa).

The protein belongs to the universal ribosomal protein uL29 family.

The chain is Large ribosomal subunit protein uL29 from Burkholderia mallei (strain NCTC 10247).